The primary structure comprises 272 residues: R3H domain-containing protein 4 (272 aa).

The interval 141–167 (LEDEGKSKARRRGPTRGEDRRREDPAY) is disordered. Residues 155-165 (TRGEDRRREDP) show a composition bias toward basic and acidic residues. The R3H domain maps to 191–254 (METLETWEER…KRQMKVSNRH (64 aa)).

It is found in the nucleus. This is R3H domain-containing protein 4 (R3HDM4) from Bos taurus (Bovine).